A 184-amino-acid chain; its full sequence is Flavin prenyltransferase UbiX (184 aa).

Residues 9–11, Ser-34, 85–88, and Arg-120 each bind FMN; these read GAS and SMKT. Tyr-150 and Arg-166 together coordinate dimethylallyl phosphate.

It belongs to the UbiX/PAD1 family.

It carries out the reaction dimethylallyl phosphate + FMNH2 = prenylated FMNH2 + phosphate. Flavin prenyltransferase that catalyzes the synthesis of the prenylated FMN cofactor (prenyl-FMN) for 4-hydroxy-3-polyprenylbenzoic acid decarboxylase UbiD. The prenyltransferase is metal-independent and links a dimethylallyl moiety from dimethylallyl monophosphate (DMAP) to the flavin N5 and C6 atoms of FMN. This is Flavin prenyltransferase UbiX from Methanocaldococcus jannaschii (strain ATCC 43067 / DSM 2661 / JAL-1 / JCM 10045 / NBRC 100440) (Methanococcus jannaschii).